Reading from the N-terminus, the 114-residue chain is Phosphoribosyl-AMP cyclohydrolase (114 aa).

Asp80 lines the Mg(2+) pocket. Cys81 contributes to the Zn(2+) binding site. Mg(2+)-binding residues include Asp82 and Asp84. 2 residues coordinate Zn(2+): Cys97 and Cys104.

It belongs to the PRA-CH family. Homodimer. It depends on Mg(2+) as a cofactor. Zn(2+) is required as a cofactor.

It is found in the cytoplasm. The enzyme catalyses 1-(5-phospho-beta-D-ribosyl)-5'-AMP + H2O = 1-(5-phospho-beta-D-ribosyl)-5-[(5-phospho-beta-D-ribosylamino)methylideneamino]imidazole-4-carboxamide. It participates in amino-acid biosynthesis; L-histidine biosynthesis; L-histidine from 5-phospho-alpha-D-ribose 1-diphosphate: step 3/9. Functionally, catalyzes the hydrolysis of the adenine ring of phosphoribosyl-AMP. This chain is Phosphoribosyl-AMP cyclohydrolase, found in Rhodococcus jostii (strain RHA1).